The sequence spans 254 residues: Pyridoxine 5'-phosphate synthase (254 aa).

Asparagine 12 is a 3-amino-2-oxopropyl phosphate binding site. 14–15 (DH) lines the 1-deoxy-D-xylulose 5-phosphate pocket. Arginine 23 contributes to the 3-amino-2-oxopropyl phosphate binding site. Histidine 48 serves as the catalytic Proton acceptor. 1-deoxy-D-xylulose 5-phosphate is bound by residues arginine 50 and histidine 55. Residue glutamate 75 is the Proton acceptor of the active site. Position 105 (threonine 105) interacts with 1-deoxy-D-xylulose 5-phosphate. Histidine 199 serves as the catalytic Proton donor. 3-amino-2-oxopropyl phosphate is bound by residues glycine 200 and 221–222 (GF).

This sequence belongs to the PNP synthase family. Homooctamer; tetramer of dimers.

The protein localises to the cytoplasm. It catalyses the reaction 3-amino-2-oxopropyl phosphate + 1-deoxy-D-xylulose 5-phosphate = pyridoxine 5'-phosphate + phosphate + 2 H2O + H(+). The protein operates within cofactor biosynthesis; pyridoxine 5'-phosphate biosynthesis; pyridoxine 5'-phosphate from D-erythrose 4-phosphate: step 5/5. In terms of biological role, catalyzes the complicated ring closure reaction between the two acyclic compounds 1-deoxy-D-xylulose-5-phosphate (DXP) and 3-amino-2-oxopropyl phosphate (1-amino-acetone-3-phosphate or AAP) to form pyridoxine 5'-phosphate (PNP) and inorganic phosphate. The sequence is that of Pyridoxine 5'-phosphate synthase from Rhodopseudomonas palustris (strain TIE-1).